The following is a 124-amino-acid chain: S-adenosylmethionine decarboxylase proenzyme (124 aa).

Ser-63 acts as the Schiff-base intermediate with substrate; via pyruvic acid in catalysis. The residue at position 63 (Ser-63) is a Pyruvic acid (Ser); by autocatalysis. His-68 acts as the Proton acceptor; for processing activity in catalysis. Cys-83 (proton donor; for catalytic activity) is an active-site residue.

It belongs to the prokaryotic AdoMetDC family. Type 1 subfamily. In terms of assembly, heterotetramer of two alpha and two beta chains arranged as a dimer of alpha/beta heterodimers. It depends on pyruvate as a cofactor. Post-translationally, is synthesized initially as an inactive proenzyme. Formation of the active enzyme involves a self-maturation process in which the active site pyruvoyl group is generated from an internal serine residue via an autocatalytic post-translational modification. Two non-identical subunits are generated from the proenzyme in this reaction, and the pyruvate is formed at the N-terminus of the alpha chain, which is derived from the carboxyl end of the proenzyme. The post-translation cleavage follows an unusual pathway, termed non-hydrolytic serinolysis, in which the side chain hydroxyl group of the serine supplies its oxygen atom to form the C-terminus of the beta chain, while the remainder of the serine residue undergoes an oxidative deamination to produce ammonia and the pyruvoyl group blocking the N-terminus of the alpha chain.

The enzyme catalyses S-adenosyl-L-methionine + H(+) = S-adenosyl 3-(methylsulfanyl)propylamine + CO2. It participates in amine and polyamine biosynthesis; S-adenosylmethioninamine biosynthesis; S-adenosylmethioninamine from S-adenosyl-L-methionine: step 1/1. In terms of biological role, catalyzes the decarboxylation of S-adenosylmethionine to S-adenosylmethioninamine (dcAdoMet), the propylamine donor required for the synthesis of the polyamines spermine and spermidine from the diamine putrescine. The chain is S-adenosylmethionine decarboxylase proenzyme from Geobacillus kaustophilus (strain HTA426).